The sequence spans 90 residues: Small ribosomal subunit protein uS19 (90 aa).

It belongs to the universal ribosomal protein uS19 family.

Functionally, protein S19 forms a complex with S13 that binds strongly to the 16S ribosomal RNA. This chain is Small ribosomal subunit protein uS19, found in Clostridium beijerinckii (strain ATCC 51743 / NCIMB 8052) (Clostridium acetobutylicum).